The following is a 254-amino-acid chain: Segregation and condensation protein A (254 aa).

Belongs to the ScpA family. In terms of assembly, component of a cohesin-like complex composed of ScpA, ScpB and the Smc homodimer, in which ScpA and ScpB bind to the head domain of Smc. The presence of the three proteins is required for the association of the complex with DNA.

The protein localises to the cytoplasm. In terms of biological role, participates in chromosomal partition during cell division. May act via the formation of a condensin-like complex containing Smc and ScpB that pull DNA away from mid-cell into both cell halves. The protein is Segregation and condensation protein A of Brevibacillus brevis (strain 47 / JCM 6285 / NBRC 100599).